The sequence spans 357 residues: Protein RecA (357 aa).

74–81 serves as a coordination point for ATP; that stretch reads GPESSGKT.

This sequence belongs to the RecA family.

The protein localises to the cytoplasm. Can catalyze the hydrolysis of ATP in the presence of single-stranded DNA, the ATP-dependent uptake of single-stranded DNA by duplex DNA, and the ATP-dependent hybridization of homologous single-stranded DNAs. It interacts with LexA causing its activation and leading to its autocatalytic cleavage. In Bordetella petrii (strain ATCC BAA-461 / DSM 12804 / CCUG 43448), this protein is Protein RecA.